The chain runs to 96 residues: MEQAPEDQGPQREPYHEWTLELLEELKNEAVRHFPRPWLHGLGQYVYSTYGDTWEGVEAVIRILQQLLFIHFRIGCHHSRIGIIPQRRGRNGASRS.

The segment at 1–42 (MEQAPEDQGPQREPYHEWTLELLEELKNEAVRHFPRPWLHGL) is homooligomerization. Residues S79, S94, and S96 each carry the phosphoserine; by host modification.

The protein belongs to the HIV-1 VPR protein family. As to quaternary structure, homooligomer, may form homodimer. Interacts with p6-gag region of the Pr55 Gag precursor protein through a (Leu-X-X)4 motif near the C-terminus of the P6gag protein. Interacts with host UNG. May interact with host RAD23A/HHR23A. Interacts with host VPRBP/DCAF1, leading to hijack the CUL4A-RBX1-DDB1-DCAF1/VPRBP complex, mediating ubiquitination of host proteins such as TERT and ZGPAT and arrest of the cell cycle in G2 phase. Post-translationally, phosphorylated on several residues by host. These phosphorylations regulate VPR activity for the nuclear import of the HIV-1 pre-integration complex.

The protein localises to the virion. It is found in the host nucleus. Its subcellular location is the host extracellular space. Its function is as follows. During virus replication, may deplete host UNG protein, and incude G2-M cell cycle arrest. Acts by targeting specific host proteins for degradation by the 26S proteasome, through association with the cellular CUL4A-DDB1 E3 ligase complex by direct interaction with host VPRPB/DCAF-1. Cell cycle arrest reportedly occurs within hours of infection and is not blocked by antiviral agents, suggesting that it is initiated by the VPR carried into the virion. Additionally, VPR induces apoptosis in a cell cycle dependent manner suggesting that these two effects are mechanistically linked. Detected in the serum and cerebrospinal fluid of AIDS patient, VPR may also induce cell death to bystander cells. Functionally, during virus entry, plays a role in the transport of the viral pre-integration (PIC) complex to the host nucleus. This function is crucial for viral infection of non-dividing macrophages. May act directly at the nuclear pore complex, by binding nucleoporins phenylalanine-glycine (FG)-repeat regions. The protein is Protein Vpr of Homo sapiens (Human).